The following is a 500-amino-acid chain: NAD(P)H-quinone oxidoreductase chain 4, chloroplastic (500 aa).

The next 14 helical transmembrane spans lie at 4–24 (FPWLTIIVVLPISAGSLIFFL), 37–57 (ICICVLELLLTTYAFCYHFQL), 87–107 (IGPILLTGFITTLATLAAWPV), 113–130 (LFHFLMLAMYSGQIGSFS), 134–154 (LLLFFLMWELELIPVYLLLSM), 167–187 (FILYTAGGSIFLLIGVLGIGL), 207–227 (IALEIIFYIGFLIAFAVKSPI), 242–262 (HYSTCMLLAGILLKMGAYGLV), 272–292 (AHSLFSPWLVVVGTMQIIYAA), 305–325 (IAYSSVSHMGFIIIGIGSITD), 330–350 (GAILQIVSHGFIGAALFFLAG), 386–406 (LALPGMSGFVAELIVFFGIIT), 411–431 (FLMAKILITFVMAIGMILTPI), and 462–482 (LFVSISILLPVIGIGIYPDFL).

Belongs to the complex I subunit 4 family.

The protein localises to the plastid. It localises to the chloroplast thylakoid membrane. The enzyme catalyses a plastoquinone + NADH + (n+1) H(+)(in) = a plastoquinol + NAD(+) + n H(+)(out). It catalyses the reaction a plastoquinone + NADPH + (n+1) H(+)(in) = a plastoquinol + NADP(+) + n H(+)(out). This Carica papaya (Papaya) protein is NAD(P)H-quinone oxidoreductase chain 4, chloroplastic.